The following is a 176-amino-acid chain: MDLPGPIHEILVLFGGFGLLLGGLGVVLLTNPIYSAFSLGLVLVCISLFYFLLNSYFVAVAQLLIYVGAINVLIIFAVMFVNGSEWSKDKNYWTIGDGFTLLLCITIPFSLMTTIPDTSWYGILWTTRSNQIVEQGLINNVQQIGIHLATDFYLPFELISLILLVSLIGAITMARQ.

5 helical membrane passes run 10 to 30 (ILVL…VLLT), 33 to 53 (IYSA…YFLL), 60 to 80 (VAQL…AVMF), 95 to 115 (IGDG…MTTI), and 152 to 172 (FYLP…GAIT).

It belongs to the complex I subunit 6 family. NDH is composed of at least 16 different subunits, 5 of which are encoded in the nucleus.

Its subcellular location is the plastid. It localises to the chloroplast thylakoid membrane. The enzyme catalyses a plastoquinone + NADH + (n+1) H(+)(in) = a plastoquinol + NAD(+) + n H(+)(out). The catalysed reaction is a plastoquinone + NADPH + (n+1) H(+)(in) = a plastoquinol + NADP(+) + n H(+)(out). NDH shuttles electrons from NAD(P)H:plastoquinone, via FMN and iron-sulfur (Fe-S) centers, to quinones in the photosynthetic chain and possibly in a chloroplast respiratory chain. The immediate electron acceptor for the enzyme in this species is believed to be plastoquinone. Couples the redox reaction to proton translocation, and thus conserves the redox energy in a proton gradient. The chain is NAD(P)H-quinone oxidoreductase subunit 6, chloroplastic (ndhG) from Zea mays (Maize).